A 390-amino-acid polypeptide reads, in one-letter code: Protein-glutamate methylesterase/protein-glutamine glutaminase (390 aa).

A Response regulatory domain is found at 4–121; that stretch reads RALVVDDSGF…SGDMEQVKRQ (118 aa). Aspartate 55 is modified (4-aspartylphosphate). The disordered stretch occupies residues 130 to 198; the sequence is GGGRGAPAGR…AAPAPERGQR (69 aa). 2 stretches are compositionally biased toward low complexity: residues 136–148 and 179–193; these read PAGRAPRPAAPVD and EAPVAPTGAPAAPAP. The region spanning 201 to 390 is the CheB-type methylesterase domain; the sequence is PGALRLVVIG…QVGEELAKLR (190 aa). Catalysis depends on residues serine 212, histidine 239, and aspartate 335.

It belongs to the CheB family. Phosphorylated by CheA. Phosphorylation of the N-terminal regulatory domain activates the methylesterase activity.

The protein resides in the cytoplasm. It carries out the reaction [protein]-L-glutamate 5-O-methyl ester + H2O = L-glutamyl-[protein] + methanol + H(+). The catalysed reaction is L-glutaminyl-[protein] + H2O = L-glutamyl-[protein] + NH4(+). Functionally, involved in chemotaxis. Part of a chemotaxis signal transduction system that modulates chemotaxis in response to various stimuli. Catalyzes the demethylation of specific methylglutamate residues introduced into the chemoreceptors (methyl-accepting chemotaxis proteins or MCP) by CheR. Also mediates the irreversible deamidation of specific glutamine residues to glutamic acid. This Alkalilimnicola ehrlichii (strain ATCC BAA-1101 / DSM 17681 / MLHE-1) protein is Protein-glutamate methylesterase/protein-glutamine glutaminase.